The chain runs to 102 residues: MKIPILPVVALLSLLALHAVQGAALGHPTIYPEDSSYNNYPTATEGLNNEFLNFKRLQSAFQSENFLNWHVITDMFKNAFPFINWDFFPKVKGLRSAAPDSQ.

Positions 1–22 (MKIPILPVVALLSLLALHAVQG) are cleaved as a signal peptide.

Expression restricted to suprabasal keratinocytes of the epidermis.

The protein resides in the secreted. In terms of biological role, may act as a soluble regulator of keratinocyte differentiation. May play an important role in embryonic skin morphogenesis. This is Keratinocyte differentiation-associated protein from Mus musculus (Mouse).